The following is a 222-amino-acid chain: Prolactin-3B1 (222 aa).

A signal peptide spans methionine 1–serine 31. 2 disulfides stabilise this stretch: cysteine 82-cysteine 197 and cysteine 214-cysteine 222.

The protein belongs to the somatotropin/prolactin family.

Its subcellular location is the secreted. This is Prolactin-3B1 (Prl3b1) from Mus musculus (Mouse).